The following is a 164-amino-acid chain: B-phycoerythrin alpha chain (164 aa).

(2R,3E)-phycoerythrobilin-binding residues include cysteine 82 and cysteine 139.

The protein belongs to the phycobiliprotein family. As to quaternary structure, heteromer of 6 alpha, 6 beta and one gamma chain. Post-translationally, contains two covalently linked bilin chromophores.

The protein resides in the plastid. Its subcellular location is the chloroplast thylakoid membrane. In terms of biological role, light-harvesting photosynthetic bile pigment-protein from the phycobiliprotein complex. In Porphyridium purpureum (Red alga), this protein is B-phycoerythrin alpha chain (cpeA).